We begin with the raw amino-acid sequence, 510 residues long: Protein ERGIC-53 (510 aa).

Positions 1–30 are cleaved as a signal peptide; that stretch reads MAGSRRRGLQARVRPLFCALLLSLSRFVGG. The Lumenal portion of the chain corresponds to 31–477; it reads DGVGGDPAAG…ELPPFPSCLS (447 aa). One can recognise an L-type lectin-like domain in the interval 44-267; it reads RRFEYKYSFK…DVLSFLTFQL (224 aa). 2 residues coordinate a carbohydrate: Ser-88 and Asp-121. Ca(2+)-binding residues include Asp-152, Phe-154, and Asn-156. Positions 156 and 178 each coordinate a carbohydrate. Asp-181 lines the Ca(2+) pocket. Residues Cys-190 and Cys-230 are joined by a disulfide bond. 251 to 253 serves as a coordination point for a carbohydrate; sequence GGL. Ser-425 carries the phosphoserine modification. Residues 478 to 498 traverse the membrane as a helical segment; the sequence is TVHFIIFVVVQTVLFIGYIMY. The Cytoplasmic segment spans residues 499–510; it reads RSQQEAAAKKFF. A mediates interaction with RAB3GAP1, RAB3GAP2 and UBXN6 region spans residues 499-510; the sequence is RSQQEAAAKKFF. The short motif at 509 to 510 is the ER export motif element; the sequence is FF.

Exists both as a covalent disulfide-linked homohexamer, and a complex of three disulfide-linked dimers non-covalently kept together. Interacts with MCFD2. May interact with TMEM115. Interacts with RAB3GAP1 and RAB3GAP2. Interacts with UBXN6. Interacts with SERPINA1/alpha1-antitrypsin. Interacts with BET1.

It localises to the endoplasmic reticulum-Golgi intermediate compartment membrane. It is found in the golgi apparatus membrane. The protein resides in the endoplasmic reticulum membrane. Its function is as follows. Mannose-specific lectin. May recognize sugar residues of glycoproteins, glycolipids, or glycosylphosphatidyl inositol anchors and may be involved in the sorting or recycling of proteins, lipids, or both. The LMAN1-MCFD2 complex forms a specific cargo receptor for the ER-to-Golgi transport of selected proteins. This chain is Protein ERGIC-53 (LMAN1), found in Chlorocebus aethiops (Green monkey).